The following is a 366-amino-acid chain: Holliday junction branch migration complex subunit RuvB (366 aa).

A large ATPase domain (RuvB-L) region spans residues 3–183; sequence ADGLVSAAAS…FGFTAHLDFY (181 aa). Residues leucine 22, arginine 23, glycine 64, lysine 67, threonine 68, serine 69, 130-132, arginine 173, tyrosine 183, and arginine 220 contribute to the ATP site; that span reads EDF. Threonine 68 is a binding site for Mg(2+). The small ATPAse domain (RuvB-S) stretch occupies residues 184-254; it reads APDELARVLT…VARAALRIYD (71 aa). Residues 257 to 366 are head domain (RuvB-H); that stretch reads GLGLDRLDRA…PEDGLHPGGG (110 aa). Arginine 312 and arginine 317 together coordinate DNA.

This sequence belongs to the RuvB family. As to quaternary structure, homohexamer. Forms an RuvA(8)-RuvB(12)-Holliday junction (HJ) complex. HJ DNA is sandwiched between 2 RuvA tetramers; dsDNA enters through RuvA and exits via RuvB. An RuvB hexamer assembles on each DNA strand where it exits the tetramer. Each RuvB hexamer is contacted by two RuvA subunits (via domain III) on 2 adjacent RuvB subunits; this complex drives branch migration. In the full resolvosome a probable DNA-RuvA(4)-RuvB(12)-RuvC(2) complex forms which resolves the HJ.

It localises to the cytoplasm. The enzyme catalyses ATP + H2O = ADP + phosphate + H(+). The RuvA-RuvB-RuvC complex processes Holliday junction (HJ) DNA during genetic recombination and DNA repair, while the RuvA-RuvB complex plays an important role in the rescue of blocked DNA replication forks via replication fork reversal (RFR). RuvA specifically binds to HJ cruciform DNA, conferring on it an open structure. The RuvB hexamer acts as an ATP-dependent pump, pulling dsDNA into and through the RuvAB complex. RuvB forms 2 homohexamers on either side of HJ DNA bound by 1 or 2 RuvA tetramers; 4 subunits per hexamer contact DNA at a time. Coordinated motions by a converter formed by DNA-disengaged RuvB subunits stimulates ATP hydrolysis and nucleotide exchange. Immobilization of the converter enables RuvB to convert the ATP-contained energy into a lever motion, pulling 2 nucleotides of DNA out of the RuvA tetramer per ATP hydrolyzed, thus driving DNA branch migration. The RuvB motors rotate together with the DNA substrate, which together with the progressing nucleotide cycle form the mechanistic basis for DNA recombination by continuous HJ branch migration. Branch migration allows RuvC to scan DNA until it finds its consensus sequence, where it cleaves and resolves cruciform DNA. This chain is Holliday junction branch migration complex subunit RuvB, found in Frankia alni (strain DSM 45986 / CECT 9034 / ACN14a).